Consider the following 130-residue polypeptide: ATP synthase epsilon chain (130 aa).

Belongs to the ATPase epsilon chain family. As to quaternary structure, F-type ATPases have 2 components, CF(1) - the catalytic core - and CF(0) - the membrane proton channel. CF(1) has five subunits: alpha(3), beta(3), gamma(1), delta(1), epsilon(1). CF(0) has three main subunits: a, b and c.

The protein localises to the cell membrane. Its function is as follows. Produces ATP from ADP in the presence of a proton gradient across the membrane. This is ATP synthase epsilon chain (atpC) from Mycoplasmoides gallisepticum (strain R(low / passage 15 / clone 2)) (Mycoplasma gallisepticum).